The primary structure comprises 277 residues: 5-formyltetrahydrofolate cyclo-ligase, mitochondrial (277 aa).

Residues 1–48 constitute a mitochondrion transit peptide; that stretch reads MIGARVFCITTTALRRSPIFFFPKIPTRPVFRLSPATRPIVAMSTTSK. An ATP-binding site is contributed by 60 to 64; sequence KRVVR. Substrate-binding positions include Glu113 and 207 to 211; that span reads RGGGY. Residues 206–213 and Asp254 each bind ATP; that span reads GRGGGYYD.

This sequence belongs to the 5-formyltetrahydrofolate cyclo-ligase family. In terms of assembly, monomer.

Its subcellular location is the mitochondrion. It catalyses the reaction (6S)-5-formyl-5,6,7,8-tetrahydrofolate + ATP = (6R)-5,10-methenyltetrahydrofolate + ADP + phosphate. In terms of biological role, contributes to tetrahydrofolate metabolism and photorespiration through the regulation of serine hydroxymethyltransferase. Prefers the pentalutamyl to the monoglutamyl form of 5-formyltetrahydrofolate. This is 5-formyltetrahydrofolate cyclo-ligase, mitochondrial (5FCL) from Arabidopsis thaliana (Mouse-ear cress).